Consider the following 108-residue polypeptide: Protein YcgL (108 aa).

The YcgL domain occupies 12-96 (MFCVIYRSSK…PPEDLLKQHL (85 aa)).

In Escherichia coli O127:H6 (strain E2348/69 / EPEC), this protein is Protein YcgL.